The chain runs to 370 residues: Histidinol-phosphate aminotransferase 1 (370 aa).

N6-(pyridoxal phosphate)lysine is present on K222.

It belongs to the class-II pyridoxal-phosphate-dependent aminotransferase family. Histidinol-phosphate aminotransferase subfamily. Homodimer. The cofactor is pyridoxal 5'-phosphate.

The enzyme catalyses L-histidinol phosphate + 2-oxoglutarate = 3-(imidazol-4-yl)-2-oxopropyl phosphate + L-glutamate. The protein operates within amino-acid biosynthesis; L-histidine biosynthesis; L-histidine from 5-phospho-alpha-D-ribose 1-diphosphate: step 7/9. This Bacillus cereus (strain ATCC 14579 / DSM 31 / CCUG 7414 / JCM 2152 / NBRC 15305 / NCIMB 9373 / NCTC 2599 / NRRL B-3711) protein is Histidinol-phosphate aminotransferase 1 (hisC1).